A 181-amino-acid polypeptide reads, in one-letter code: Probable cobalt-precorrin-6B C(15)-methyltransferase (decarboxylating) (181 aa).

Residues T16, G40–G44, D61, and A89 each bind S-adenosyl-L-methionine.

Belongs to the methyltransferase superfamily. Archaeal-type CbiT family.

The enzyme catalyses Co-precorrin-6B + S-adenosyl-L-methionine = Co-precorrin-7 + S-adenosyl-L-homocysteine + CO2. It participates in cofactor biosynthesis; adenosylcobalamin biosynthesis; cob(II)yrinate a,c-diamide from sirohydrochlorin (anaerobic route): step 8/10. Its function is as follows. Catalyzes the methylation of C-15 in cobalt-precorrin-6B followed by the decarboxylation of C-12 to form cobalt-precorrin-7. The protein is Probable cobalt-precorrin-6B C(15)-methyltransferase (decarboxylating) of Methanococcus maripaludis (strain C7 / ATCC BAA-1331).